We begin with the raw amino-acid sequence, 263 residues long: Indole-3-glycerol phosphate synthase (263 aa).

It belongs to the TrpC family.

It catalyses the reaction 1-(2-carboxyphenylamino)-1-deoxy-D-ribulose 5-phosphate + H(+) = (1S,2R)-1-C-(indol-3-yl)glycerol 3-phosphate + CO2 + H2O. Its pathway is amino-acid biosynthesis; L-tryptophan biosynthesis; L-tryptophan from chorismate: step 4/5. The sequence is that of Indole-3-glycerol phosphate synthase from Laribacter hongkongensis (strain HLHK9).